The following is a 449-amino-acid chain: Phosphoglucosamine mutase (449 aa).

S102 functions as the Phosphoserine intermediate in the catalytic mechanism. Mg(2+) is bound by residues S102, D241, D243, and D245. Phosphoserine is present on S102.

The protein belongs to the phosphohexose mutase family. Mg(2+) is required as a cofactor. Activated by phosphorylation.

The catalysed reaction is alpha-D-glucosamine 1-phosphate = D-glucosamine 6-phosphate. Catalyzes the conversion of glucosamine-6-phosphate to glucosamine-1-phosphate. The sequence is that of Phosphoglucosamine mutase from Roseobacter denitrificans (strain ATCC 33942 / OCh 114) (Erythrobacter sp. (strain OCh 114)).